A 174-amino-acid polypeptide reads, in one-letter code: Trypsin inhibitor (174 aa).

2 disulfide bridges follow: Cys-40–Cys-86 and Cys-131–Cys-140.

The protein belongs to the protease inhibitor I3 (leguminous Kunitz-type inhibitor) family. As to quaternary structure, heterodimer of an alpha and a beta chain linked by a disulfide bond.

Inhibits trypsin and chymotrypsin with a 1:1 stoichiometry, with dissociation constants of 1.56 nM and 120 nM respectively. Inhibits plasma kallikrein, factor XIIa and plasmin with dissociation constants of 5.0 nM, 150 nM and 18 nM respectively. Does not inhibit factor Xa, thrombin, tissue kallikrein or cysteine proteinases such as papain and bromelain. This Enterolobium contortisiliquum (Pacara earpod tree) protein is Trypsin inhibitor.